We begin with the raw amino-acid sequence, 82 residues long: Endocuticle structural protein SgAbd-6 (82 aa).

Position 1 is a pyrrolidone carboxylic acid (Gln-1). The region spanning 18-82 is the Chitin-binding type R&amp;R domain; the sequence is LGQYTFGFKT…ENGFQPQYTQ (65 aa).

Its function is as follows. Component of the abdominal endocuticle. The chain is Endocuticle structural protein SgAbd-6 from Schistocerca gregaria (Desert locust).